The chain runs to 184 residues: Large ribosomal subunit protein uL5c (184 aa).

It belongs to the universal ribosomal protein uL5 family. As to quaternary structure, part of the 50S ribosomal subunit; contacts the 5S rRNA.

Its subcellular location is the plastid. It localises to the chloroplast. Functionally, binds 5S rRNA, forms part of the central protuberance of the 50S subunit. The protein is Large ribosomal subunit protein uL5c (rpl5) of Zygnema circumcarinatum (Green alga).